The primary structure comprises 191 residues: Molybdenum cofactor guanylyltransferase (191 aa).

GTP-binding positions include Leu13 to Gly15, Lys26, Asp72, and Asp102. A Mg(2+)-binding site is contributed by Asp102.

This sequence belongs to the MobA family. As to quaternary structure, monomer. Requires Mg(2+) as cofactor.

It localises to the cytoplasm. It catalyses the reaction Mo-molybdopterin + GTP + H(+) = Mo-molybdopterin guanine dinucleotide + diphosphate. Transfers a GMP moiety from GTP to Mo-molybdopterin (Mo-MPT) cofactor (Moco or molybdenum cofactor) to form Mo-molybdopterin guanine dinucleotide (Mo-MGD) cofactor. The chain is Molybdenum cofactor guanylyltransferase from Pseudomonas entomophila (strain L48).